An 885-amino-acid chain; its full sequence is Initiator protein NS1 (885 aa).

The disordered stretch occupies residues 404 to 477 (AEAGPSGTQP…GREDIFSGAP (74 aa)). Residues 409–423 (SGTQPVETAQQSPPT) are compositionally biased toward polar residues. The segment covering 452–465 (QAAGGSEMGAGGSA) has biased composition (gly residues).

The protein belongs to the parvoviruses initiator protein NS1 family. As to quaternary structure, homooligomer. Mg(2+) serves as cofactor.

Its subcellular location is the host nucleus. The catalysed reaction is ATP + H2O = ADP + phosphate + H(+). Functionally, multifunctional protein which displays endonuclease and helicase activities required for initiating and directing viral DNA replication. Also plays a role in viral packaging and transactivation of several promoters. Binds site-specifically to 2-3 approximate tandem copies within the origins of replication (Ori), unwinds this hairpin region and nicks one DNA strand thereby initiating the rolling circle replication (RCR). The protein is Initiator protein NS1 of Bombyx mori densovirus (BmDNV).